Reading from the N-terminus, the 511-residue chain is Pancreatic alpha-amylase (511 aa).

An N-terminal signal peptide occupies residues 1 to 15; sequence MKLFLLLSAFGFCWA. Gln16 carries the pyrrolidone carboxylic acid modification. Cystine bridges form between Cys43-Cys101, Cys85-Cys130, and Cys156-Cys175. Residues Asn115, Arg173, and Asp182 each coordinate Ca(2+). Arg210 contributes to the chloride binding site. Asp212 serves as the catalytic Nucleophile. His216 is a Ca(2+) binding site. Glu248 functions as the Proton donor in the catalytic mechanism. Residues Asn313 and Arg352 each coordinate chloride. Cys393 and Cys399 are joined by a disulfide. The N-linked (GlcNAc...) asparagine glycan is linked to Asn427. A disulfide bond links Cys465 and Cys477.

This sequence belongs to the glycosyl hydrolase 13 family. Binds to the sea anemone inhibitor helianthamide and magnificamide. The cofactor is Ca(2+). Chloride serves as cofactor.

Its subcellular location is the secreted. It localises to the extracellular space. The catalysed reaction is Endohydrolysis of (1-&gt;4)-alpha-D-glucosidic linkages in polysaccharides containing three or more (1-&gt;4)-alpha-linked D-glucose units.. The polypeptide is Pancreatic alpha-amylase (AMY2) (Sus scrofa (Pig)).